The primary structure comprises 254 residues: Precorrin-3B C(17)-methyltransferase (254 aa).

This sequence belongs to the precorrin methyltransferase family.

The catalysed reaction is precorrin-3B + S-adenosyl-L-methionine = precorrin-4 + S-adenosyl-L-homocysteine + 3 H(+). It functions in the pathway cofactor biosynthesis; adenosylcobalamin biosynthesis; cob(II)yrinate a,c-diamide from precorrin-2 (aerobic route): step 3/10. Methyltransferase that catalyzes the methylation of C-17 in precorrin-3B to form precorrin-4. In Sinorhizobium sp, this protein is Precorrin-3B C(17)-methyltransferase (cobJ).